Consider the following 335-residue polypeptide: Phosphate acyltransferase (335 aa).

Belongs to the PlsX family. Homodimer. Probably interacts with PlsY.

The protein localises to the cytoplasm. It catalyses the reaction a fatty acyl-[ACP] + phosphate = an acyl phosphate + holo-[ACP]. It functions in the pathway lipid metabolism; phospholipid metabolism. Functionally, catalyzes the reversible formation of acyl-phosphate (acyl-PO(4)) from acyl-[acyl-carrier-protein] (acyl-ACP). This enzyme utilizes acyl-ACP as fatty acyl donor, but not acyl-CoA. The sequence is that of Phosphate acyltransferase from Alkaliphilus oremlandii (strain OhILAs) (Clostridium oremlandii (strain OhILAs)).